Reading from the N-terminus, the 135-residue chain is Small ribosomal subunit protein uS11 (135 aa).

Belongs to the universal ribosomal protein uS11 family. In terms of assembly, part of the 30S ribosomal subunit. Interacts with proteins S7 and S18. Binds to IF-3.

In terms of biological role, located on the platform of the 30S subunit, it bridges several disparate RNA helices of the 16S rRNA. Forms part of the Shine-Dalgarno cleft in the 70S ribosome. In Polynucleobacter necessarius subsp. necessarius (strain STIR1), this protein is Small ribosomal subunit protein uS11.